A 414-amino-acid polypeptide reads, in one-letter code: Protein PHLOEM PROTEIN 2-LIKE A10 (414 aa).

A run of 2 helical transmembrane segments spans residues 20–40 (WLIFMAISGVSGYGAYKVYHL) and 379–399 (YVGAKSSVIITVCLALYLHII).

The protein resides in the membrane. The sequence is that of Protein PHLOEM PROTEIN 2-LIKE A10 (PP2A10) from Arabidopsis thaliana (Mouse-ear cress).